A 367-amino-acid polypeptide reads, in one-letter code: Chorismate synthase (367 aa).

Arg48 contacts NADP(+). FMN contacts are provided by residues 125–127 (RSS), 243–244 (NA), Gly283, 298–302 (KPTSS), and Arg324.

It belongs to the chorismate synthase family. As to quaternary structure, homotetramer. Requires FMNH2 as cofactor.

The enzyme catalyses 5-O-(1-carboxyvinyl)-3-phosphoshikimate = chorismate + phosphate. Its pathway is metabolic intermediate biosynthesis; chorismate biosynthesis; chorismate from D-erythrose 4-phosphate and phosphoenolpyruvate: step 7/7. In terms of biological role, catalyzes the anti-1,4-elimination of the C-3 phosphate and the C-6 proR hydrogen from 5-enolpyruvylshikimate-3-phosphate (EPSP) to yield chorismate, which is the branch point compound that serves as the starting substrate for the three terminal pathways of aromatic amino acid biosynthesis. This reaction introduces a second double bond into the aromatic ring system. The polypeptide is Chorismate synthase (Psychrobacter sp. (strain PRwf-1)).